Here is a 160-residue protein sequence, read N- to C-terminus: Cytochrome b6-f complex subunit 4 (160 aa).

3 helical membrane passes run 36–56 (LLYI…GLAV), 95–115 (LLGV…PFLE), and 131–151 (TVFL…TLPI).

The protein belongs to the cytochrome b family. PetD subfamily. The 4 large subunits of the cytochrome b6-f complex are cytochrome b6, subunit IV (17 kDa polypeptide, petD), cytochrome f and the Rieske protein, while the 4 small subunits are petG, petL, petM and petN. The complex functions as a dimer.

It localises to the plastid. The protein localises to the chloroplast thylakoid membrane. Functionally, component of the cytochrome b6-f complex, which mediates electron transfer between photosystem II (PSII) and photosystem I (PSI), cyclic electron flow around PSI, and state transitions. The protein is Cytochrome b6-f complex subunit 4 of Saccharum hybrid (Sugarcane).